The following is a 369-amino-acid chain: Septin-5 (369 aa).

Residue Thr13 is modified to Phosphothreonine. The 274-residue stretch at 41–314 (KGFDFTLMVA…ENYRAHCIQQ (274 aa)) folds into the Septin-type G domain. Residues 51 to 58 (GESGLGKS) form a G1 motif region. Residues 51 to 58 (GESGLGKS), Thr85, and Gly111 contribute to the GTP site. The segment at 108-111 (DTPG) is G3 motif. The residue at position 168 (Arg168) is an Omega-N-methylarginine. Residues 189-192 (AKAD) are G4 motif. 190–198 (KADCLVPSE) serves as a coordination point for GTP. Residue Ser225 is modified to Phosphoserine. Positions 248 and 263 each coordinate GTP. The residue at position 327 (Ser327) is a Phosphoserine. The residue at position 336 (Thr336) is a Phosphothreonine. Residues 338–369 (DAETEKLIRMKDEELRRMQEMLQRMKQQMQDQ) are a coiled coil.

This sequence belongs to the TRAFAC class TrmE-Era-EngA-EngB-Septin-like GTPase superfamily. Septin GTPase family. In terms of assembly, septins polymerize into heterooligomeric protein complexes that form filaments, and can associate with cellular membranes, actin filaments and microtubules. GTPase activity is required for filament formation. Interacts with SEPTIN2 and SEPTIN5. In platelets, associated with a complex containing STX4. Interacts with PRKN; this interaction leads to SEPTIN5 ubiquitination and degradation. Interacts with DYRK1A. Interacts with STX1A; in the cerebellar cortex. Phosphorylated by DYRK1A. In platelets, phosphorylated in response to thrombin, phorbol-12-myristate-13-acetate and collagen. In terms of tissue distribution, expressed at high levels in the CNS, as well as in heart and platelets (at protein level).

It is found in the cytoplasm. Its subcellular location is the cytoskeleton. Its function is as follows. Filament-forming cytoskeletal GTPase. May play a role in cytokinesis (Potential). May play a role in platelet secretion. The sequence is that of Septin-5 from Homo sapiens (Human).